A 56-amino-acid polypeptide reads, in one-letter code: Large ribosomal subunit protein bL32 (56 aa).

Residues M1–W20 show a composition bias toward basic residues. Positions M1 to V24 are disordered.

It belongs to the bacterial ribosomal protein bL32 family.

The protein is Large ribosomal subunit protein bL32 of Frankia casuarinae (strain DSM 45818 / CECT 9043 / HFP020203 / CcI3).